Reading from the N-terminus, the 106-residue chain is UPF0091 protein RC0354 (106 aa).

The protein belongs to the UPF0091 family.

This Rickettsia conorii (strain ATCC VR-613 / Malish 7) protein is UPF0091 protein RC0354.